Consider the following 288-residue polypeptide: Bifunctional protein FolD 2 (288 aa).

Residues 166–168 (GRS) and S191 each bind NADP(+).

This sequence belongs to the tetrahydrofolate dehydrogenase/cyclohydrolase family. As to quaternary structure, homodimer.

It catalyses the reaction (6R)-5,10-methylene-5,6,7,8-tetrahydrofolate + NADP(+) = (6R)-5,10-methenyltetrahydrofolate + NADPH. It carries out the reaction (6R)-5,10-methenyltetrahydrofolate + H2O = (6R)-10-formyltetrahydrofolate + H(+). The protein operates within one-carbon metabolism; tetrahydrofolate interconversion. In terms of biological role, catalyzes the oxidation of 5,10-methylenetetrahydrofolate to 5,10-methenyltetrahydrofolate and then the hydrolysis of 5,10-methenyltetrahydrofolate to 10-formyltetrahydrofolate. This is Bifunctional protein FolD 2 from Frankia alni (strain DSM 45986 / CECT 9034 / ACN14a).